A 221-amino-acid polypeptide reads, in one-letter code: Factor arrest protein 7 (221 aa).

Component of a complex at least composed of FAR3, FAR7, FAR8, FAR10, FAR11 and VPS64.

Its function is as follows. Participates in the control of the reentry into the cell cycle following pheromone treatment. The protein is Factor arrest protein 7 (FAR7) of Saccharomyces cerevisiae (strain ATCC 204508 / S288c) (Baker's yeast).